The primary structure comprises 1110 residues: Nitric oxide synthase 3 (1110 aa).

The interval 1–74 is disordered; sequence MGNFKSVGQE…PPEGPKFPRV (74 aa). The segment covering 15 to 27 has biased composition (gly residues); that stretch reads CGLGLGLGLGLCG. Positions 31–40 are enriched in low complexity; it reads PASPAPVSAS. A compositionally biased stretch (pro residues) spans 47 to 69; sequence SSPPLPLPAPEHSPPLTRPPEGP. Zn(2+) contacts are provided by Cys-97 and Cys-102. Residues 101 to 489 are interaction with NOSIP; that stretch reads RCLGSLVFPR…PDPWKGSGTK (389 aa). Ser-105 is a (6R)-L-erythro-5,6,7,8-tetrahydrobiopterin binding site. Ser-117 carries the phosphoserine modification. Cys-187 provides a ligand contact to heme b. Residues Gln-250, Trp-359, Tyr-360, and Glu-364 each coordinate L-arginine. Residue Arg-368 participates in (6R)-L-erythro-5,6,7,8-tetrahydrobiopterin binding. Asn-369 contributes to the L-arginine binding site. Residues Ala-449, Trp-450, and Phe-463 each contribute to the (6R)-L-erythro-5,6,7,8-tetrahydrobiopterin site. Tyr-478 lines the heme b pocket. Phosphothreonine is present on Thr-498. 6 residues coordinate FMN: Ser-529, Glu-530, Thr-531, Arg-533, Ser-575, and Thr-576. 3 positions are modified to phosphoserine: Ser-618, Ser-636, and Ser-641. Residues Ser-657, Cys-664, Glu-690, and Gln-694 each coordinate FMN. Residue Arg-779 coordinates NADP(+). His-801 provides a ligand contact to FAD. Residues 821–848 are disordered; it reads EDPPPPAESVAVEQLEKGSPGGPPPGWV. Ser-839 carries the phosphoserine modification. FAD contacts are provided by Arg-941, Tyr-943, Ser-944, Thr-959, Ala-961, Tyr-965, Val-978, Cys-979, and Ser-980. Residues Thr-1019, Arg-1052, Ser-1081, Arg-1082, and Lys-1088 each coordinate NADP(+).

It belongs to the NOS family. Homodimer. Interacts with NOSIP and NOSTRIN. Interacts with HSP90AB1. Forms a complex with ASL, ASS1 and SLC7A1; the complex regulates cell-autonomous L-arginine synthesis and citrulline recycling while channeling extracellular L-arginine to nitric oxide synthesis pathway. Heme b serves as cofactor. Requires FAD as cofactor. The cofactor is FMN. (6R)-L-erythro-5,6,7,8-tetrahydrobiopterin is required as a cofactor.

The protein resides in the membrane. It localises to the caveola. The protein localises to the cytoplasm. Its subcellular location is the cytoskeleton. It is found in the golgi apparatus. The protein resides in the cell membrane. It catalyses the reaction 2 L-arginine + 3 NADPH + 4 O2 + H(+) = 2 L-citrulline + 2 nitric oxide + 3 NADP(+) + 4 H2O. Its activity is regulated as follows. Stimulated by calcium/calmodulin. Inhibited by NOSIP and NOSTRIN. Produces nitric oxide (NO) which is implicated in vascular smooth muscle relaxation through a cGMP-mediated signal transduction pathway. NO mediates vascular endothelial growth factor (VEGF)-induced angiogenesis in coronary vessels and promotes blood clotting through the activation of platelets. The chain is Nitric oxide synthase 3 (NOS3) from Cavia porcellus (Guinea pig).